A 387-amino-acid polypeptide reads, in one-letter code: Galactokinase (387 aa).

Glu36–Asp39 contributes to the substrate binding site. ATP-binding positions include Ser70 and Gly125–Ser131. Residues Ser131 and Glu163 each contribute to the Mg(2+) site. Asp175 functions as the Proton acceptor in the catalytic mechanism. Tyr227 is a substrate binding site.

Belongs to the GHMP kinase family. GalK subfamily.

It localises to the cytoplasm. It carries out the reaction alpha-D-galactose + ATP = alpha-D-galactose 1-phosphate + ADP + H(+). Its pathway is carbohydrate metabolism; galactose metabolism. Catalyzes the transfer of the gamma-phosphate of ATP to D-galactose to form alpha-D-galactose-1-phosphate (Gal-1-P). This is Galactokinase from Streptomyces coelicolor (strain ATCC BAA-471 / A3(2) / M145).